Here is a 150-residue protein sequence, read N- to C-terminus: Cell division protein SepF (150 aa).

The tract at residues 26–45 is disordered; the sequence is DREEIPEEHESKDRTAYQSK.

This sequence belongs to the SepF family. As to quaternary structure, homodimer. Interacts with FtsZ.

The protein resides in the cytoplasm. Its function is as follows. Cell division protein that is part of the divisome complex and is recruited early to the Z-ring. Probably stimulates Z-ring formation, perhaps through the cross-linking of FtsZ protofilaments. Its function overlaps with FtsA. In Bacillus licheniformis (strain ATCC 14580 / DSM 13 / JCM 2505 / CCUG 7422 / NBRC 12200 / NCIMB 9375 / NCTC 10341 / NRRL NRS-1264 / Gibson 46), this protein is Cell division protein SepF.